A 267-amino-acid chain; its full sequence is tRNA pseudouridine synthase A (267 aa).

The Nucleophile role is filled by Asp-51. Residue Tyr-109 participates in substrate binding.

The protein belongs to the tRNA pseudouridine synthase TruA family. Homodimer.

The catalysed reaction is uridine(38/39/40) in tRNA = pseudouridine(38/39/40) in tRNA. Its function is as follows. Formation of pseudouridine at positions 38, 39 and 40 in the anticodon stem and loop of transfer RNAs. This chain is tRNA pseudouridine synthase A, found in Staphylococcus aureus (strain Mu3 / ATCC 700698).